The sequence spans 421 residues: Imidazolonepropionase (421 aa).

Residues H80 and H82 each coordinate Fe(3+). Residues H80 and H82 each contribute to the Zn(2+) site. 4-imidazolone-5-propanoate is bound by residues R89, Y152, and H185. Y152 is a binding site for N-formimidoyl-L-glutamate. A Fe(3+)-binding site is contributed by H249. Zn(2+) is bound at residue H249. Residue E252 coordinates 4-imidazolone-5-propanoate. Fe(3+) is bound at residue D324. D324 is a binding site for Zn(2+). Positions 326 and 328 each coordinate N-formimidoyl-L-glutamate. S329 provides a ligand contact to 4-imidazolone-5-propanoate.

The protein belongs to the metallo-dependent hydrolases superfamily. HutI family. Zn(2+) serves as cofactor. The cofactor is Fe(3+).

The protein localises to the cytoplasm. The catalysed reaction is 4-imidazolone-5-propanoate + H2O = N-formimidoyl-L-glutamate. It participates in amino-acid degradation; L-histidine degradation into L-glutamate; N-formimidoyl-L-glutamate from L-histidine: step 3/3. Functionally, catalyzes the hydrolytic cleavage of the carbon-nitrogen bond in imidazolone-5-propanoate to yield N-formimidoyl-L-glutamate. It is the third step in the universal histidine degradation pathway. The chain is Imidazolonepropionase from Bacillus velezensis (strain DSM 23117 / BGSC 10A6 / LMG 26770 / FZB42) (Bacillus amyloliquefaciens subsp. plantarum).